A 188-amino-acid polypeptide reads, in one-letter code: Probable DNA-directed RNA polymerase subunit delta (188 aa).

Residues 14 to 81 (LSMIEVAHAL…GNNVWALRSW (68 aa)) form the HTH HARE-type domain. The interval 96–188 (EIEDEEEEEK…EDDSDDTDED (93 aa)) is disordered. Composition is skewed to acidic residues over residues 118-150 (IEDE…EDKD) and 158-188 (ELAE…TDED).

It belongs to the RpoE family. In terms of assembly, RNAP is composed of a core of 2 alpha, a beta and a beta' subunits. The core is associated with a delta subunit and one of several sigma factors.

In terms of biological role, participates in both the initiation and recycling phases of transcription. In the presence of the delta subunit, RNAP displays an increased specificity of transcription, a decreased affinity for nucleic acids, and an increased efficiency of RNA synthesis because of enhanced recycling. The protein is Probable DNA-directed RNA polymerase subunit delta of Lactococcus lactis subsp. cremoris (strain MG1363).